The chain runs to 448 residues: MTVITRFAPSPTGKLHIGNVRVALVNWLYAQKYNGNFILRIDDTDRDRSKVEYHEAIIKDLQWLGINWNSSFLQSIRFNKYKAAKQYLISSGRLYECYETPEMLEIERKRQLTSGYPPIYSRKALELTKAQKVQLQAEGYKVHYRFLIDRNKPIIWNDLIKGEIKYDGSNISDPIVIKEDGTMIYMLCSVIDDIEYRISHIIRGEDHITNTAIQIQMFEALGAAIPQLGHLSLIKSDSGKISKRIGGFTIDYLRDQLGIEPMAVNNLLALSGTSNNVDAYFSLESLITKFDLSAFSKSAIIYNENELVTLNHKLLVNTEYDTIKHRLTAIGLPDVTKEFWLAVRHNLNTLNDIKIWWQICYLPTLDKFQEQDAEFLKLAAGLLPSGKLTDNSWDDWVQNIIKATNRRGKALFMPLRLALTGITYGPELKYLLPLIGGEEVKARLLRHQ.

The short motif at 9-19 (PSPTGKLHIGN) is the 'HIGH' region element. Residues 240–244 (KISKR) carry the 'KMSKS' region motif. Lys243 serves as a coordination point for ATP.

The protein belongs to the class-I aminoacyl-tRNA synthetase family. Glutamate--tRNA ligase type 1 subfamily. Monomer.

It localises to the cytoplasm. The enzyme catalyses tRNA(Glu) + L-glutamate + ATP = L-glutamyl-tRNA(Glu) + AMP + diphosphate. In terms of biological role, catalyzes the attachment of glutamate to tRNA(Glu) in a two-step reaction: glutamate is first activated by ATP to form Glu-AMP and then transferred to the acceptor end of tRNA(Glu). The protein is Glutamate--tRNA ligase 2 of Orientia tsutsugamushi (strain Boryong) (Rickettsia tsutsugamushi).